Consider the following 241-residue polypeptide: Probable 2-phosphosulfolactate phosphatase (241 aa).

Belongs to the ComB family. Mg(2+) serves as cofactor.

The catalysed reaction is (2R)-O-phospho-3-sulfolactate + H2O = (2R)-3-sulfolactate + phosphate. The polypeptide is Probable 2-phosphosulfolactate phosphatase (Caldanaerobacter subterraneus subsp. tengcongensis (strain DSM 15242 / JCM 11007 / NBRC 100824 / MB4) (Thermoanaerobacter tengcongensis)).